The primary structure comprises 149 residues: Ricin B-like lectin (149 aa).

Ser-2 is subject to N-acetylserine. Residues Asp-21, Gly-24, Asn-39, and Asn-47 each coordinate a carbohydrate. The segment at Pro-110–Leu-112 is involved in dimerization.

Homodimer. In terms of processing, the N-terminus is blocked.

Lectin specific for terminal, non-reducing N-acetylgalactosamine (Gal-NAc)-containing carbohydrates including N,N'-diacetyllactosediamine/LDN (GalNAcbeta1-4GlcNAc, LacdiNAc). Specific also for carbohydrates containing N-acetylglucosamine (-GlcNAc) or N-acetyllactosamine (-Galbeta1-4GlcNAc) at the reducing end. Agglutinates human blood group A, AB, B and O erythrocytes with a strong preference for group A. Agglutinates bovine erythrocytes with a very low specificity. Binds carbohydrates bivalently, which is required for its biological activity. Exhibits insecticidal activity against the fruit fly D.melanogaster, mosquito A.aegypti, and amoebozoa A.castellanii. Has anti-nutritional activity against Colorado potato beetle L.decemlineata, and against worm C.elegans. Has antiproliferative activity against human leukemic T-cells. Has an immunostimulatory effect on human antigen-presenting dendritic cells, which are subsequently able to induce efficient T-cell immune responses. In Clitocybe nebularis (Clouded agaric), this protein is Ricin B-like lectin.